The following is a 322-amino-acid chain: uncharacterized protein (322 aa).

Transmembrane regions (helical) follow at residues 159–179, 203–223, 234–254, 267–287, and 296–316; these read GIIFCIVSILYCIINIRMLYL, MNIPALGAWGSVVAITFYIWL, GGILTMTAFLLSAIAAIRVGL, FEGSSAVVIAIILGALPLIPY, and TLLSGYLSIVISMIINSFFAW.

Its subcellular location is the membrane. This is an uncharacterized protein from Dictyostelium discoideum (Social amoeba).